A 233-amino-acid polypeptide reads, in one-letter code: 2,3,4,5-tetrahydropyridine-2,6-dicarboxylate N-acetyltransferase (233 aa).

This sequence belongs to the transferase hexapeptide repeat family. DapH subfamily.

It catalyses the reaction (S)-2,3,4,5-tetrahydrodipicolinate + acetyl-CoA + H2O = L-2-acetamido-6-oxoheptanedioate + CoA. Its pathway is amino-acid biosynthesis; L-lysine biosynthesis via DAP pathway; LL-2,6-diaminopimelate from (S)-tetrahydrodipicolinate (acetylase route): step 1/3. Functionally, catalyzes the transfer of an acetyl group from acetyl-CoA to tetrahydrodipicolinate. This Petrotoga mobilis (strain DSM 10674 / SJ95) protein is 2,3,4,5-tetrahydropyridine-2,6-dicarboxylate N-acetyltransferase.